A 356-amino-acid chain; its full sequence is Phosphoribosylformylglycinamidine cyclo-ligase (356 aa).

It belongs to the AIR synthase family.

The protein localises to the cytoplasm. The catalysed reaction is 2-formamido-N(1)-(5-O-phospho-beta-D-ribosyl)acetamidine + ATP = 5-amino-1-(5-phospho-beta-D-ribosyl)imidazole + ADP + phosphate + H(+). Its pathway is purine metabolism; IMP biosynthesis via de novo pathway; 5-amino-1-(5-phospho-D-ribosyl)imidazole from N(2)-formyl-N(1)-(5-phospho-D-ribosyl)glycinamide: step 2/2. In Sinorhizobium medicae (strain WSM419) (Ensifer medicae), this protein is Phosphoribosylformylglycinamidine cyclo-ligase.